The sequence spans 188 residues: FMN-dependent NADPH-azoreductase (188 aa).

The protein belongs to the azoreductase type 2 family. In terms of assembly, homotetramer. Requires FMN as cofactor.

Catalyzes the reductive cleavage of azo bond in aromatic azo compounds to the corresponding amines. Requires NADPH, but not NADH, as an electron donor for its activity. The sequence is that of FMN-dependent NADPH-azoreductase (azo1) from Staphylococcus saprophyticus subsp. saprophyticus (strain ATCC 15305 / DSM 20229 / NCIMB 8711 / NCTC 7292 / S-41).